Here is a 358-residue protein sequence, read N- to C-terminus: Phosphoserine aminotransferase (358 aa).

Residue R41 participates in L-glutamate binding. Pyridoxal 5'-phosphate-binding positions include A75–S76, W100, T148, D167, and Q190. Position 191 is an N6-(pyridoxal phosphate)lysine (K191). Residue N233–T234 coordinates pyridoxal 5'-phosphate.

Belongs to the class-V pyridoxal-phosphate-dependent aminotransferase family. SerC subfamily. As to quaternary structure, homodimer. It depends on pyridoxal 5'-phosphate as a cofactor.

The protein localises to the cytoplasm. The catalysed reaction is O-phospho-L-serine + 2-oxoglutarate = 3-phosphooxypyruvate + L-glutamate. It carries out the reaction 4-(phosphooxy)-L-threonine + 2-oxoglutarate = (R)-3-hydroxy-2-oxo-4-phosphooxybutanoate + L-glutamate. It participates in amino-acid biosynthesis; L-serine biosynthesis; L-serine from 3-phospho-D-glycerate: step 2/3. It functions in the pathway cofactor biosynthesis; pyridoxine 5'-phosphate biosynthesis; pyridoxine 5'-phosphate from D-erythrose 4-phosphate: step 3/5. In terms of biological role, catalyzes the reversible conversion of 3-phosphohydroxypyruvate to phosphoserine and of 3-hydroxy-2-oxo-4-phosphonooxybutanoate to phosphohydroxythreonine. This Campylobacter jejuni subsp. doylei (strain ATCC BAA-1458 / RM4099 / 269.97) protein is Phosphoserine aminotransferase.